Reading from the N-terminus, the 171-residue chain is Small ribosomal subunit protein uS4 (171 aa).

Residues 104–168 (RRLQTIVYKK…SPFKERAEEA (65 aa)) form the S4 RNA-binding domain.

It belongs to the universal ribosomal protein uS4 family. In terms of assembly, part of the 30S ribosomal subunit. Contacts protein S5. The interaction surface between S4 and S5 is involved in control of translational fidelity.

Functionally, one of the primary rRNA binding proteins, it binds directly to 16S rRNA where it nucleates assembly of the body of the 30S subunit. In terms of biological role, with S5 and S12 plays an important role in translational accuracy. This chain is Small ribosomal subunit protein uS4, found in Aeropyrum pernix (strain ATCC 700893 / DSM 11879 / JCM 9820 / NBRC 100138 / K1).